Consider the following 279-residue polypeptide: Formamidopyrimidine-DNA glycosylase (279 aa).

Proline 2 functions as the Schiff-base intermediate with DNA in the catalytic mechanism. The active-site Proton donor is glutamate 3. Catalysis depends on lysine 57, which acts as the Proton donor; for beta-elimination activity. DNA is bound by residues histidine 90, arginine 109, and arginine 151. The FPG-type zinc-finger motif lies at 236–270; sequence FVYGRTGQPCRVCQTPIAVLRLGQRSTFYCPACQQ. The active-site Proton donor; for delta-elimination activity is the arginine 260.

This sequence belongs to the FPG family. As to quaternary structure, monomer. Zn(2+) serves as cofactor.

It catalyses the reaction Hydrolysis of DNA containing ring-opened 7-methylguanine residues, releasing 2,6-diamino-4-hydroxy-5-(N-methyl)formamidopyrimidine.. The catalysed reaction is 2'-deoxyribonucleotide-(2'-deoxyribose 5'-phosphate)-2'-deoxyribonucleotide-DNA = a 3'-end 2'-deoxyribonucleotide-(2,3-dehydro-2,3-deoxyribose 5'-phosphate)-DNA + a 5'-end 5'-phospho-2'-deoxyribonucleoside-DNA + H(+). Functionally, involved in base excision repair of DNA damaged by oxidation or by mutagenic agents. Acts as a DNA glycosylase that recognizes and removes damaged bases. Has a preference for oxidized purines, such as 7,8-dihydro-8-oxoguanine (8-oxoG). Has AP (apurinic/apyrimidinic) lyase activity and introduces nicks in the DNA strand. Cleaves the DNA backbone by beta-delta elimination to generate a single-strand break at the site of the removed base with both 3'- and 5'-phosphates. The chain is Formamidopyrimidine-DNA glycosylase from Methylobacillus flagellatus (strain ATCC 51484 / DSM 6875 / VKM B-1610 / KT).